We begin with the raw amino-acid sequence, 1052 residues long: F-box/WD repeat-containing protein 10 (1052 aa).

One copy of the WD 1 repeat lies at 169 to 206 (GLNQDITDVCFSPEKDHSSKSATSQVYWTAKTQHTSLP). The F-box domain occupies 276–323 (DFIRYLPIHLSKYILRMLDRHTLNKCASVSQHWAAMAQQVKMDLSAHG). WD repeat units lie at residues 409 to 447 (SDTWDQNRVIHYSGGDLIAVSSNRKIHLLDIIQVKAIPV), 451 to 490 (GHAGSVRALFLCEEENFLLSGSYDLSIRYWDLKSGVCTRI), 493 to 532 (GHQGTITCMDLCKNRLVSGGRDCQVKVWDVDTGKCLKTFR), 534 to 569 (KDPILATRINDTYIVSSCERGLVKVWHIAMAQLVKT), 572 to 609 (GHEGAVKCLFFDQWHLLSGSTDGLVMAWSMVGKYERCL), and 611 to 652 (AFKH…KVLK). Residues 690-719 (YAVEKTKQKKNKEKEEEKEENSLMEILSKC) adopt a coiled-coil conformation. Positions 766 to 805 (LQSQGKSKSPRRDADDVEKAQKQGQLETPGKLPSHPKKKS) are disordered. Positions 775-786 (PRRDADDVEKAQ) are enriched in basic and acidic residues. Residues 986 to 1010 (VLLTVKEEKEHQEAKMKEYQAREST) are a coiled coil.

In terms of biological role, probable substrate-recognition component of a SCF (SKP1-CUL1-F-box protein)-type E3 ubiquitin ligase complex which mediates the ubiquitination and subsequent proteasomal degradation of target proteins. Overexpression is leading to degradation of CBX5 and CBX1. This Homo sapiens (Human) protein is F-box/WD repeat-containing protein 10 (FBXW10).